The primary structure comprises 646 residues: Long-chain fatty acid transport protein 1 (646 aa).

Topologically, residues 1–13 (MRTPGAGTASVAS) are extracellular. The chain crosses the membrane as a helical span at residues 14–34 (LGLLWLLGLPWTWSAAAAFGV). Residues 35–646 (YVGSGGWRFL…ARICAGDFSL (612 aa)) are Cytoplasmic-facing. The interval 191-475 (EVSEQLGKSL…YVSDSATNKK (285 aa)) is sufficient for oligomerization. Position 246-257 (246-257 (YIYTSGTTGLPK)) interacts with AMP.

Belongs to the ATP-dependent AMP-binding enzyme family. Self-associates. May function as a homodimer. Interacts with EPRS1; mediates the translocation of SLC27A1 from the cytoplasm to the plasma membrane thereby increasing the uptake of long-chain fatty acids. Interacts with DGAT2 and this interaction is enhanced in the presence of ZFYVE1. As to expression, expressed in muscle.

Its subcellular location is the cell membrane. It localises to the endomembrane system. The protein localises to the cytoplasm. The enzyme catalyses a fatty acid(in) = a fatty acid(out). The catalysed reaction is (9Z)-octadecenoate(out) = (9Z)-octadecenoate(in). It catalyses the reaction hexadecanoate(out) = hexadecanoate(in). It carries out the reaction (5Z,8Z,11Z,14Z)-eicosatetraenoate(out) = (5Z,8Z,11Z,14Z)-eicosatetraenoate(in). The enzyme catalyses (9Z,12Z)-octadecadienoate(out) = (9Z,12Z)-octadecadienoate(in). The catalysed reaction is a long-chain fatty acid + ATP + CoA = a long-chain fatty acyl-CoA + AMP + diphosphate. It catalyses the reaction (5Z,8Z,11Z,14Z)-eicosatetraenoate + ATP + CoA = (5Z,8Z,11Z,14Z)-eicosatetraenoyl-CoA + AMP + diphosphate. It carries out the reaction a very long-chain fatty acid + ATP + CoA = a very long-chain fatty acyl-CoA + AMP + diphosphate. The enzyme catalyses tetracosanoate + ATP + CoA = tetracosanoyl-CoA + AMP + diphosphate. Its activity is regulated as follows. Inhibited by Triacsin C. In terms of biological role, mediates the import of long-chain fatty acids (LCFA) into the cell by facilitating their transport at the plasma membrane. Also functions as an acyl-CoA ligase catalyzing the ATP-dependent formation of fatty acyl-CoA using LCFA and very-long-chain fatty acids (VLCFA) as substrates, which prevents fatty acid efflux from cells and might drive more fatty acid uptake. May act directly as a bona fide transporter, or alternatively, in a cytoplasmic or membrane-associated multimeric protein complex to trap and draw fatty acids towards accumulation. Plays a pivotal role in regulating available LCFA substrates from exogenous sources in tissues undergoing high levels of beta-oxidation or triglyceride synthesis. May be involved in regulation of cholesterol metabolism. Probably involved in fatty acid transport across the blood barrier. The sequence is that of Long-chain fatty acid transport protein 1 from Rattus norvegicus (Rat).